The primary structure comprises 132 residues: Small heat shock protein hspL (132 aa).

Residues 15 to 131 (TFTNFVSAPV…VKMSNNNKVE (117 aa)) form the sHSP domain.

The protein belongs to the small heat shock protein (HSP20) family.

In Dictyostelium discoideum (Social amoeba), this protein is Small heat shock protein hspL (hspL).